The following is a 162-amino-acid chain: Nucleotide-binding protein CMM_2802 (162 aa).

This sequence belongs to the YajQ family.

Nucleotide-binding protein. The sequence is that of Nucleotide-binding protein CMM_2802 from Clavibacter michiganensis subsp. michiganensis (strain NCPPB 382).